A 344-amino-acid polypeptide reads, in one-letter code: NADH-ubiquinone oxidoreductase chain 2 (344 aa).

Helical transmembrane passes span 1–21 (MNPL…TITL), 24–44 (FHWL…IPLM), 59–79 (YFLT…ISAW), 94–114 (MNIL…HFWI), 121–141 (ISLP…MALL), 150–170 (LNLT…GGIG), 177–197 (IMAF…KFDP), 201–221 (LLNF…LTTI), 245–265 (LILL…KLLI), 273–293 (NATL…FFYI), and 324–344 (TAIM…LLLL).

It belongs to the complex I subunit 2 family.

The protein resides in the mitochondrion inner membrane. It catalyses the reaction a ubiquinone + NADH + 5 H(+)(in) = a ubiquinol + NAD(+) + 4 H(+)(out). Its function is as follows. Core subunit of the mitochondrial membrane respiratory chain NADH dehydrogenase (Complex I) that is believed to belong to the minimal assembly required for catalysis. Complex I functions in the transfer of electrons from NADH to the respiratory chain. The immediate electron acceptor for the enzyme is believed to be ubiquinone. The sequence is that of NADH-ubiquinone oxidoreductase chain 2 (MT-ND2) from Aquarana catesbeiana (American bullfrog).